A 321-amino-acid polypeptide reads, in one-letter code: Transaldolase (321 aa).

K132 functions as the Schiff-base intermediate with substrate in the catalytic mechanism.

It belongs to the transaldolase family. Type 1 subfamily. As to quaternary structure, homodimer.

Its subcellular location is the cytoplasm. It carries out the reaction D-sedoheptulose 7-phosphate + D-glyceraldehyde 3-phosphate = D-erythrose 4-phosphate + beta-D-fructose 6-phosphate. Its pathway is carbohydrate degradation; pentose phosphate pathway; D-glyceraldehyde 3-phosphate and beta-D-fructose 6-phosphate from D-ribose 5-phosphate and D-xylulose 5-phosphate (non-oxidative stage): step 2/3. Transaldolase is important for the balance of metabolites in the pentose-phosphate pathway. The polypeptide is Transaldolase (Rhizobium rhizogenes (strain K84 / ATCC BAA-868) (Agrobacterium radiobacter)).